Reading from the N-terminus, the 245-residue chain is 6-carboxyhexanoate--CoA ligase (245 aa).

The protein belongs to the BioW family. In terms of assembly, homodimer. It depends on Mg(2+) as a cofactor.

The catalysed reaction is heptanedioate + ATP + CoA = 6-carboxyhexanoyl-CoA + AMP + diphosphate. It functions in the pathway metabolic intermediate metabolism; pimeloyl-CoA biosynthesis; pimeloyl-CoA from pimelate: step 1/1. Functionally, catalyzes the transformation of pimelate into pimeloyl-CoA with concomitant hydrolysis of ATP to AMP. The sequence is that of 6-carboxyhexanoate--CoA ligase from Sulfurihydrogenibium azorense (strain DSM 15241 / OCM 825 / Az-Fu1).